Consider the following 348-residue polypeptide: Probable WRKY transcription factor 27 (348 aa).

Disordered regions lie at residues 19–52, 67–90, 133–153, and 218–320; these read VSTT…ASSS, TTTT…SPSP, LLQQ…QQKR, and GEHT…LIPN. The span at 75–85 shows a compositional bias: pro residues; that stretch reads SPPPLLPPPKA. A compositionally biased stretch (low complexity) spans 133–142; the sequence is LLQQQSQPPL. Basic residues predominate over residues 143-153; sequence RSRKRKNQQKR. A DNA-binding region (WRKY) is located at residues 159 to 225; it reads TQENLSSDLW…YTGEHTHPRP (67 aa). The segment covering 228–242 has biased composition (polar residues); it reads RNSLAGSTRNKSQPV. Acidic residues predominate over residues 274 to 315; the sequence is DVQETNGDEDMVGQEVNMEEEEEEEEVEEDDEEEEDDDDVDD.

This sequence belongs to the WRKY group II-e family.

Its subcellular location is the nucleus. Functionally, transcription factor. Interacts specifically with the W box (5'-(T)TGAC[CT]-3'), a frequently occurring elicitor-responsive cis-acting element. This chain is Probable WRKY transcription factor 27 (WRKY27), found in Arabidopsis thaliana (Mouse-ear cress).